The following is a 170-amino-acid chain: Cyclic pyranopterin monophosphate synthase (170 aa).

Residues 89-91 (LCH) and 125-126 (ME) contribute to the substrate site. D140 is a catalytic residue.

Belongs to the MoaC family. As to quaternary structure, homohexamer; trimer of dimers.

It catalyses the reaction (8S)-3',8-cyclo-7,8-dihydroguanosine 5'-triphosphate = cyclic pyranopterin phosphate + diphosphate. It functions in the pathway cofactor biosynthesis; molybdopterin biosynthesis. Its function is as follows. Catalyzes the conversion of (8S)-3',8-cyclo-7,8-dihydroguanosine 5'-triphosphate to cyclic pyranopterin monophosphate (cPMP). This is Cyclic pyranopterin monophosphate synthase from Streptomyces avermitilis (strain ATCC 31267 / DSM 46492 / JCM 5070 / NBRC 14893 / NCIMB 12804 / NRRL 8165 / MA-4680).